We begin with the raw amino-acid sequence, 197 residues long: Imidazoleglycerol-phosphate dehydratase (197 aa).

Belongs to the imidazoleglycerol-phosphate dehydratase family.

The protein resides in the cytoplasm. It carries out the reaction D-erythro-1-(imidazol-4-yl)glycerol 3-phosphate = 3-(imidazol-4-yl)-2-oxopropyl phosphate + H2O. The protein operates within amino-acid biosynthesis; L-histidine biosynthesis; L-histidine from 5-phospho-alpha-D-ribose 1-diphosphate: step 6/9. The protein is Imidazoleglycerol-phosphate dehydratase of Bradyrhizobium sp. (strain BTAi1 / ATCC BAA-1182).